We begin with the raw amino-acid sequence, 460 residues long: Proline--tRNA ligase (460 aa).

This sequence belongs to the class-II aminoacyl-tRNA synthetase family. ProS type 3 subfamily. Homodimer.

It localises to the cytoplasm. It catalyses the reaction tRNA(Pro) + L-proline + ATP = L-prolyl-tRNA(Pro) + AMP + diphosphate. Functionally, catalyzes the attachment of proline to tRNA(Pro) in a two-step reaction: proline is first activated by ATP to form Pro-AMP and then transferred to the acceptor end of tRNA(Pro). This chain is Proline--tRNA ligase, found in Methanococcus maripaludis (strain C7 / ATCC BAA-1331).